Here is a 362-residue protein sequence, read N- to C-terminus: MESTLSAQNIRRLLANETPIIDVRAPIEFNQGAMPNAINLPLMNNEERAAVGTCYKQHGSQKAVELGHQLVKGEIKAHRVAAWREACERFPSGFICCARGGMRSHIVQKWLAEIGIDYPLIEGGYKALRQATIEMTNELVQRPIILIGGCTGNGKTTLVRSLPEGIDLEGFAHHRGSSFGRTVEAQFAQATFENYLAVDMLKKSSYHSRWVLEDEGRAIGANGLPESLRIQMATAHLVVVDDPFERRMARLKEEYFDRMTHDFIEAYGEEKGWQEYSDYLHHGLYAIRRRLGAQRAAELTQLLDNALAAQKISANTEVHFSWLSPLLKEYYDPMYRYQLSKKQDKIIYTGSYEEVEQWFANH.

A Rhodanese domain is found at 14–137 (LANETPIIDV…LRQATIEMTN (124 aa)). Residue C97 is the S-selanylcysteine intermediate of the active site.

This sequence belongs to the SelU family. As to quaternary structure, monomer.

It carries out the reaction 5-methylaminomethyl-2-thiouridine(34) in tRNA + selenophosphate + (2E)-geranyl diphosphate + H2O + H(+) = 5-methylaminomethyl-2-selenouridine(34) in tRNA + (2E)-thiogeraniol + phosphate + diphosphate. It catalyses the reaction 5-methylaminomethyl-2-thiouridine(34) in tRNA + (2E)-geranyl diphosphate = 5-methylaminomethyl-S-(2E)-geranyl-thiouridine(34) in tRNA + diphosphate. The catalysed reaction is 5-methylaminomethyl-S-(2E)-geranyl-thiouridine(34) in tRNA + selenophosphate + H(+) = 5-methylaminomethyl-2-(Se-phospho)selenouridine(34) in tRNA + (2E)-thiogeraniol. The enzyme catalyses 5-methylaminomethyl-2-(Se-phospho)selenouridine(34) in tRNA + H2O = 5-methylaminomethyl-2-selenouridine(34) in tRNA + phosphate. In terms of biological role, involved in the post-transcriptional modification of the uridine at the wobble position (U34) of tRNA(Lys), tRNA(Glu) and tRNA(Gln). Catalyzes the conversion of 2-thiouridine (S2U-RNA) to 2-selenouridine (Se2U-RNA). Acts in a two-step process involving geranylation of 2-thiouridine (S2U) to S-geranyl-2-thiouridine (geS2U) and subsequent selenation of the latter derivative to 2-selenouridine (Se2U) in the tRNA chain. This chain is tRNA 2-selenouridine synthase, found in Proteus mirabilis (strain HI4320).